A 255-amino-acid polypeptide reads, in one-letter code: MSLDLSTSLSPARPLESADAMEERLREIGAARYHDRHPFHHMLHGGELTRGQVQAWALNRYYYQCTIPVKDAVVISRFRDRATRIEWRHRLEDHDGAEGAEGGIDRWLILTDGLGLDRAYVESTEGILPATRFAVEAYVHFVRDRSPLEAIASCLTELFAPNIHATRISGMLSHYDFINPTVMAYFQRRLTQAPRDADYALRYVREHARTPEERAAVCNALIFKTQVLWTQLDALHHAYVLGHVPPGAFVPEEMR.

The protein belongs to the PqqC family.

The catalysed reaction is 6-(2-amino-2-carboxyethyl)-7,8-dioxo-1,2,3,4,7,8-hexahydroquinoline-2,4-dicarboxylate + 3 O2 = pyrroloquinoline quinone + 2 H2O2 + 2 H2O + H(+). The protein operates within cofactor biosynthesis; pyrroloquinoline quinone biosynthesis. Its function is as follows. Ring cyclization and eight-electron oxidation of 3a-(2-amino-2-carboxyethyl)-4,5-dioxo-4,5,6,7,8,9-hexahydroquinoline-7,9-dicarboxylic-acid to PQQ. In Cereibacter sphaeroides (strain KD131 / KCTC 12085) (Rhodobacter sphaeroides), this protein is Pyrroloquinoline-quinone synthase.